The following is a 569-amino-acid chain: Small ribosomal subunit protein bS1 (569 aa).

S1 motif domains are found at residues 52–116 (GAIL…LSRE), 134–199 (GSIV…VSRR), 220–288 (GERR…LGLK), 305–375 (GKRV…LGLK), 392–462 (GLRV…LGVK), and 479–548 (GSDI…LSIK).

It belongs to the bacterial ribosomal protein bS1 family.

Functionally, binds mRNA; thus facilitating recognition of the initiation point. It is needed to translate mRNA with a short Shine-Dalgarno (SD) purine-rich sequence. The chain is Small ribosomal subunit protein bS1 (rpsA) from Chlamydia trachomatis serovar D (strain ATCC VR-885 / DSM 19411 / UW-3/Cx).